The primary structure comprises 228 residues: uncharacterized protein (228 aa).

The region spanning 7-228 (VEVHHLKKSV…LVNGQLQEEA (222 aa)) is the ABC transporter domain. ATP is bound at residue 43–50 (GESGSGKS).

This sequence belongs to the ABC transporter superfamily.

This is an uncharacterized protein from Escherichia coli O157:H7.